The sequence spans 449 residues: MREILHIQGGQCGNQIGSKFWEVVCDEHGIDPTGRYVGNSDLQLERVNVYYNEASCGRYVPRAILMDLEPGTMDSVRTGPYGQIFRPDNFVFGQSGAGNNWAKGHYTEGAELIDAVLDVVRKEAENCDCLQGFQVCHSLGGGTGSGMGTLLISKIREEYPDRMMLTFSVFPSPKVSDTVVEPYNATLSVHQLVENADECMVLDNEALYDICFRTLKLTTPSFGDLNHLISATMSGVTCCLRFPGQLNSDLRKLAVNLIPFPRLHFFMVGFAPLTSRGSQQYRALTVPELTQQMWDSKNMMCAADPRHGRYLTASAMFRGKMSTKEVDEQMINVQNKNSSYFVEWIPNNVKSSVCDIAPRGLSMASTFIGNSTSIQEMFRRVSEQFTAMFRRKAFLHWYTGEGMDEMEFTEAESNMNDLVSEYQQYQDATADDEGEYEEDEDEEEILDHE.

Residues Q11, E69, S138, G142, T143, G144, N204, and N226 each contribute to the GTP site. Residue E69 participates in Mg(2+) binding. Positions 425-449 are disordered; it reads YQDATADDEGEYEEDEDEEEILDHE. Residues 429–449 are compositionally biased toward acidic residues; it reads TADDEGEYEEDEDEEEILDHE.

The protein belongs to the tubulin family. In terms of assembly, dimer of alpha and beta chains. A typical microtubule is a hollow water-filled tube with an outer diameter of 25 nm and an inner diameter of 15 nM. Alpha-beta heterodimers associate head-to-tail to form protofilaments running lengthwise along the microtubule wall with the beta-tubulin subunit facing the microtubule plus end conferring a structural polarity. Microtubules usually have 13 protofilaments but different protofilament numbers can be found in some organisms and specialized cells. Mg(2+) serves as cofactor.

The protein resides in the cytoplasm. The protein localises to the cytoskeleton. Tubulin is the major constituent of microtubules, a cylinder consisting of laterally associated linear protofilaments composed of alpha- and beta-tubulin heterodimers. Microtubules grow by the addition of GTP-tubulin dimers to the microtubule end, where a stabilizing cap forms. Below the cap, tubulin dimers are in GDP-bound state, owing to GTPase activity of alpha-tubulin. The chain is Tubulin beta-6 chain (TUBB6) from Arabidopsis thaliana (Mouse-ear cress).